The primary structure comprises 980 residues: Valine--tRNA ligase (980 aa).

The interval 1–40 (MADKGCEAAQSKDSSAPGSGEPRPKTEKELERERQKAAKL) is disordered. The segment covering 22–40 (PRPKTEKELERERQKAAKL) has biased composition (basic and acidic residues). Residues 139-149 (PNVTGALHIGH) carry the 'HIGH' region motif. The short motif at 652-656 (KMSKS) is the 'KMSKS' region element. Position 655 (Lys655) interacts with ATP.

The protein belongs to the class-I aminoacyl-tRNA synthetase family.

It is found in the cytoplasm. The enzyme catalyses tRNA(Val) + L-valine + ATP = L-valyl-tRNA(Val) + AMP + diphosphate. In Schizosaccharomyces pombe (strain 972 / ATCC 24843) (Fission yeast), this protein is Valine--tRNA ligase (vas2).